Here is a 697-residue protein sequence, read N- to C-terminus: Beta-galactosidase 17 (697 aa).

The N-terminal stretch at Met-1–Phe-35 is a signal peptide. The active-site Proton donor is the Glu-218. Glu-301 (nucleophile) is an active-site residue. N-linked (GlcNAc...) asparagine glycosylation is found at Asn-333, Asn-519, Asn-573, Asn-583, and Asn-690.

Belongs to the glycosyl hydrolase 35 family. Ubiquitous, with higher expression levels in roots and siliques.

It localises to the secreted. It is found in the extracellular space. Its subcellular location is the apoplast. It catalyses the reaction Hydrolysis of terminal non-reducing beta-D-galactose residues in beta-D-galactosides.. The chain is Beta-galactosidase 17 (BGAL17) from Arabidopsis thaliana (Mouse-ear cress).